The sequence spans 532 residues: MRYSLRQDIAVEPVIAGWYGWSYLLPPQTLARFVHNRFNRIVESYLDDPQVHAAAVRQRRMHGGPWIHAHEHRDAIEAWYRETAPRRERLDELFEAVRRLEEDILPRHHGECLDPVYQELPAALAGRVEVFYGRDNRTADYRFVEPLMYASEYYDESWQQVRFRPVTEDAREFALTTPMLEYGPEQLLVDVPLNSPLLDAVFRGGLTGTELDDLAARFGLDGERAARFASYFEPTPAASEAPAPASSSEEDVLEYVGHACVFARHRGTTFLVDPVLSYSGYPGGAENRFTFADLPERIDHLLITHNHQDHMLFETLLRIRHRVGRVLVPKSTNASLVDPGLGGILRRLGFTDVVEVDDLETLSCGSAEVVALPFLGEHGDLRIRSKTGWLIRFGERSVLFAADSTNISPTMYTKVAEVIGPVDTVFIGMESIGAAASWIYGPLYGEPLDRRTDQSRRLNGSNFPQAREIVDALEPDEVYVYAMGLEPWMGVVMAVDYDESHPAIVDSDLLVRHVQDKGGTAERLHLRRTLRL.

Positions 305, 307, 309, 310, 377, and 403 each coordinate Fe cation.

It belongs to the metallo-beta-lactamase superfamily. Homodimer. The cofactor is Fe(2+).

The catalysed reaction is 4-amino-L-phenylalanyl-[peptidyl-carrier protein] + AH2 + O2 = (2R)-2-(4-aminophenyl)-L-seryl-[peptidyl-carrier protein] + A + H2O. It functions in the pathway antibiotic biosynthesis. In terms of biological role, involved in chloramphenicol biosynthesis. Catalyzes the beta-hydroxylation of 4-amino-L-phenylalanine (L-PAPA) covalently bound to CmlP to form L-p-aminophenylserine. This is 4-amino-L-phenylalanyl-[CmlP-peptidyl-carrier-protein] 3-hydroxylase from Streptomyces venezuelae (strain ATCC 10712 / CBS 650.69 / DSM 40230 / JCM 4526 / NBRC 13096 / PD 04745).